A 523-amino-acid chain; its full sequence is Putative pentatricopeptide repeat-containing protein At3g15200 (523 aa).

10 PPR repeats span residues serine 142–arginine 172, asparagine 177–aspartate 211, aspartate 212–glutamate 242, aspartate 246–proline 280, aspartate 281–proline 315, aspartate 316–proline 350, asparagine 351–cysteine 385, asparagine 388–glutamate 418, threonine 420–proline 454, and aspartate 455–proline 489. A disordered region spans residues leucine 497–aspartate 523.

Belongs to the PPR family. P subfamily.

This is Putative pentatricopeptide repeat-containing protein At3g15200 from Arabidopsis thaliana (Mouse-ear cress).